A 143-amino-acid polypeptide reads, in one-letter code: Putative 2'-deoxynucleoside 5'-phosphate N-hydrolase 1 (143 aa).

Residues histidine 37, glutamate 82, and 106 to 108 contribute to the substrate site; that span reads SAM.

It belongs to the 2'-deoxynucleoside 5'-phosphate N-hydrolase 1 family. As to quaternary structure, monomer and homodimer.

It carries out the reaction a pyrimidine 2'-deoxyribonucleoside 5'-phosphate + H2O = a pyrimidine nucleobase + 2-deoxy-D-ribose 5-phosphate. The enzyme catalyses a purine 2'-deoxyribonucleoside 5'-phosphate + H2O = a purine nucleobase + 2-deoxy-D-ribose 5-phosphate. In terms of biological role, catalyzes the cleavage of the N-glycosidic bond of deoxyribonucleoside 5'-monophosphates to yield deoxyribose 5-phosphate and a purine or pyrimidine base. The sequence is that of Putative 2'-deoxynucleoside 5'-phosphate N-hydrolase 1 from Thermofilum pendens (strain DSM 2475 / Hrk 5).